Here is a 382-residue protein sequence, read N- to C-terminus: Palmitoyltransferase ZDHHC16B (382 aa).

Over 1 to 75 (MRSWRWSVSR…IYWLVDNMTR (75 aa)) the chain is Cytoplasmic. Residues 76–96 (WFGVVFVCLVMALTSSVVVIV) traverse the membrane as a helical segment. The Lumenal portion of the chain corresponds to 97–107 (YLCVLPIIFSS). Residues 108–130 (YPVYWILWHLCYGHWNLLMVVFH) form a helical membrane-spanning segment. The Cytoplasmic portion of the chain corresponds to 131–196 (YYKATTTQPG…NNCVGHFNHR (66 aa)). One can recognise a DHHC domain in the interval 153-203 (TICKKCIVPKPARTHHCSICNRCILKMDHHCPWLNNCVGHFNHRYFFSFCL). Cys183 functions as the S-palmitoyl cysteine intermediate in the catalytic mechanism. A helical transmembrane segment spans residues 197–217 (YFFSFCLFMTMGCVYCSISAK). Residues 218–275 (DMFLDAYNAIESGRYKGGASQGEAVPGAGLIYISFQHQSSYQTPPPAFTHQERMVHKS) lie on the Lumenal side of the membrane. A helical membrane pass occupies residues 276 to 296 (LVYLWVLTSSVAVALGALTLW). At 297 to 382 (HAILITRGET…PAYKSSTTAI (86 aa)) the chain is on the cytoplasmic side.

The protein belongs to the DHHC palmitoyltransferase family.

The protein localises to the endoplasmic reticulum membrane. It catalyses the reaction L-cysteinyl-[protein] + hexadecanoyl-CoA = S-hexadecanoyl-L-cysteinyl-[protein] + CoA. Its function is as follows. Palmitoyl acyltransferase that mediates palmitoylation of proteins and is required during embryonic heart development. Involved in the proliferation of neural stem cells by regulating the FGF/ERK pathway. The chain is Palmitoyltransferase ZDHHC16B from Danio rerio (Zebrafish).